Reading from the N-terminus, the 236-residue chain is 1-(5-phosphoribosyl)-5-[(5-phosphoribosylamino)methylideneamino] imidazole-4-carboxamide isomerase (236 aa).

Asp8 acts as the Proton acceptor in catalysis. The active-site Proton donor is Asp129.

Belongs to the HisA/HisF family.

It localises to the cytoplasm. The enzyme catalyses 1-(5-phospho-beta-D-ribosyl)-5-[(5-phospho-beta-D-ribosylamino)methylideneamino]imidazole-4-carboxamide = 5-[(5-phospho-1-deoxy-D-ribulos-1-ylimino)methylamino]-1-(5-phospho-beta-D-ribosyl)imidazole-4-carboxamide. It functions in the pathway amino-acid biosynthesis; L-histidine biosynthesis; L-histidine from 5-phospho-alpha-D-ribose 1-diphosphate: step 4/9. This chain is 1-(5-phosphoribosyl)-5-[(5-phosphoribosylamino)methylideneamino] imidazole-4-carboxamide isomerase, found in Methanospirillum hungatei JF-1 (strain ATCC 27890 / DSM 864 / NBRC 100397 / JF-1).